The sequence spans 123 residues: MRLPAFLRPRTAKQLAGQAGEDQALIYLQQQGLQLLERNFRCKGGEIDLLMQDGKALVFVEVRMRSEKKFGGAAASIGTAKQKRLIIAAQIYLQRYSMPPPCRFDVIAFDDKEMTWLKNAIEA.

The protein belongs to the UPF0102 family.

This chain is UPF0102 protein mma_0204, found in Janthinobacterium sp. (strain Marseille) (Minibacterium massiliensis).